The chain runs to 108 residues: Thiosulfate sulfurtransferase GlpE (108 aa).

The 89-residue stretch at 17 to 105 folds into the Rhodanese domain; the sequence is KDGSAALVDI…WARQYPQDVE (89 aa). The Cysteine persulfide intermediate role is filled by Cys-65.

The protein belongs to the GlpE family.

It localises to the cytoplasm. The enzyme catalyses thiosulfate + hydrogen cyanide = thiocyanate + sulfite + 2 H(+). It carries out the reaction thiosulfate + [thioredoxin]-dithiol = [thioredoxin]-disulfide + hydrogen sulfide + sulfite + 2 H(+). In terms of biological role, transferase that catalyzes the transfer of sulfur from thiosulfate to thiophilic acceptors such as cyanide or dithiols. May function in a CysM-independent thiosulfate assimilation pathway by catalyzing the conversion of thiosulfate to sulfite, which can then be used for L-cysteine biosynthesis. The protein is Thiosulfate sulfurtransferase GlpE of Serratia proteamaculans (strain 568).